The chain runs to 215 residues: Chaperone protein TorD (215 aa).

The protein belongs to the TorD/DmsD family. TorD subfamily.

The protein resides in the cytoplasm. Its function is as follows. Involved in the biogenesis of TorA. Acts on TorA before the insertion of the molybdenum cofactor and, as a result, probably favors a conformation of the apoenzyme that is competent for acquiring the cofactor. This Vibrio vulnificus (strain CMCP6) protein is Chaperone protein TorD.